A 135-amino-acid chain; its full sequence is Large ribosomal subunit protein uL16c (135 aa).

This sequence belongs to the universal ribosomal protein uL16 family. In terms of assembly, part of the 50S ribosomal subunit.

Its subcellular location is the plastid. The protein resides in the chloroplast. The sequence is that of Large ribosomal subunit protein uL16c from Lotus japonicus (Lotus corniculatus var. japonicus).